A 212-amino-acid chain; its full sequence is 3,4-dihydroxy-2-butanone 4-phosphate synthase (212 aa).

D-ribulose 5-phosphate-binding positions include arginine 37 to glutamate 38, aspartate 42, arginine 150 to threonine 154, and glutamate 174. Residue glutamate 38 coordinates Mg(2+). Histidine 153 lines the Mg(2+) pocket.

It belongs to the DHBP synthase family. In terms of assembly, homodimer. It depends on Mg(2+) as a cofactor. Mn(2+) serves as cofactor.

It catalyses the reaction D-ribulose 5-phosphate = (2S)-2-hydroxy-3-oxobutyl phosphate + formate + H(+). Its pathway is cofactor biosynthesis; riboflavin biosynthesis; 2-hydroxy-3-oxobutyl phosphate from D-ribulose 5-phosphate: step 1/1. Its function is as follows. Catalyzes the conversion of D-ribulose 5-phosphate to formate and 3,4-dihydroxy-2-butanone 4-phosphate. The chain is 3,4-dihydroxy-2-butanone 4-phosphate synthase from Shewanella pealeana (strain ATCC 700345 / ANG-SQ1).